The primary structure comprises 407 residues: Amylovoran biosynthesis glycosyltransferase AmsK (407 aa).

This sequence belongs to the glycosyltransferase group 1 family. Glycosyltransferase 4 subfamily.

The protein operates within glycan metabolism; exopolysaccharide biosynthesis. Involved in the biosynthesis of amylovoran which functions as a virulence factor. The polypeptide is Amylovoran biosynthesis glycosyltransferase AmsK (amsK) (Erwinia amylovora (Fire blight bacteria)).